A 268-amino-acid polypeptide reads, in one-letter code: Nickel import ATP-binding protein NikE (268 aa).

The ABC transporter domain occupies 4–252; that stretch reads LNVCGLSHHY…SSDAGRVLQN (249 aa). Residue 45–52 coordinates ATP; sequence GRSGCGKS.

This sequence belongs to the ABC transporter superfamily. Nickel importer (TC 3.A.1.5.3) family. In terms of assembly, the complex is composed of two ATP-binding proteins (NikD and NikE), two transmembrane proteins (NikB and NikC) and a solute-binding protein (NikA).

The protein localises to the cell inner membrane. The catalysed reaction is Ni(2+)(out) + ATP + H2O = Ni(2+)(in) + ADP + phosphate + H(+). Part of the ABC transporter complex NikABCDE involved in nickel import. Responsible for energy coupling to the transport system. This is Nickel import ATP-binding protein NikE from Shigella flexneri.